The sequence spans 553 residues: Dihydroxy-acid dehydratase (553 aa).

Residue Asp78 participates in Mg(2+) binding. Cys119 is a [2Fe-2S] cluster binding site. Mg(2+) contacts are provided by Asp120 and Lys121. Lys121 is subject to N6-carboxylysine. A [2Fe-2S] cluster-binding site is contributed by Cys193. Glu441 is a binding site for Mg(2+). The active-site Proton acceptor is Ser467.

The protein belongs to the IlvD/Edd family. As to quaternary structure, homodimer. It depends on [2Fe-2S] cluster as a cofactor. Requires Mg(2+) as cofactor.

The catalysed reaction is (2R)-2,3-dihydroxy-3-methylbutanoate = 3-methyl-2-oxobutanoate + H2O. It carries out the reaction (2R,3R)-2,3-dihydroxy-3-methylpentanoate = (S)-3-methyl-2-oxopentanoate + H2O. It participates in amino-acid biosynthesis; L-isoleucine biosynthesis; L-isoleucine from 2-oxobutanoate: step 3/4. It functions in the pathway amino-acid biosynthesis; L-valine biosynthesis; L-valine from pyruvate: step 3/4. Functions in the biosynthesis of branched-chain amino acids. Catalyzes the dehydration of (2R,3R)-2,3-dihydroxy-3-methylpentanoate (2,3-dihydroxy-3-methylvalerate) into 2-oxo-3-methylpentanoate (2-oxo-3-methylvalerate) and of (2R)-2,3-dihydroxy-3-methylbutanoate (2,3-dihydroxyisovalerate) into 2-oxo-3-methylbutanoate (2-oxoisovalerate), the penultimate precursor to L-isoleucine and L-valine, respectively. This Geobacter metallireducens (strain ATCC 53774 / DSM 7210 / GS-15) protein is Dihydroxy-acid dehydratase.